The sequence spans 487 residues: DNA ligase (487 aa).

K159 serves as the catalytic N6-AMP-lysine intermediate. ATP is bound by residues R164, R182, and E217. E217 lines the a divalent metal cation pocket. Residues E229–A237 are interaction with the sliding clamp. E344 contributes to the a divalent metal cation binding site. ATP contacts are provided by R359 and K365.

The protein belongs to the ATP-dependent DNA ligase family. In terms of assembly, interacts with the sliding clamp. A divalent metal cation serves as cofactor.

The catalysed reaction is ATP + (deoxyribonucleotide)n-3'-hydroxyl + 5'-phospho-(deoxyribonucleotide)m = (deoxyribonucleotide)n+m + AMP + diphosphate.. Its function is as follows. DNA ligase, which is expressed in the early stage of lytic development, has been implicated in T4 DNA synthesis and genetic recombination. It may also play a role in T4 DNA repair. The protein is DNA ligase (30) of Enterobacteria phage T4 (Bacteriophage T4).